Reading from the N-terminus, the 871-residue chain is Alanine--tRNA ligase (871 aa).

Zn(2+) is bound by residues His563, His567, Cys665, and His669.

Belongs to the class-II aminoacyl-tRNA synthetase family. Zn(2+) is required as a cofactor.

It localises to the cytoplasm. It catalyses the reaction tRNA(Ala) + L-alanine + ATP = L-alanyl-tRNA(Ala) + AMP + diphosphate. Catalyzes the attachment of alanine to tRNA(Ala) in a two-step reaction: alanine is first activated by ATP to form Ala-AMP and then transferred to the acceptor end of tRNA(Ala). Also edits incorrectly charged Ser-tRNA(Ala) and Gly-tRNA(Ala) via its editing domain. The sequence is that of Alanine--tRNA ligase from Christiangramia forsetii (strain DSM 17595 / CGMCC 1.15422 / KT0803) (Gramella forsetii).